Reading from the N-terminus, the 168-residue chain is GTP-dependent dephospho-CoA kinase (168 aa).

Asp40, Val41, Val42, Asp59, and Glu112 together coordinate GTP.

Belongs to the GTP-dependent DPCK family.

It carries out the reaction 3'-dephospho-CoA + GTP = GDP + CoA + H(+). Its pathway is cofactor biosynthesis; coenzyme A biosynthesis. Catalyzes the GTP-dependent phosphorylation of the 3'-hydroxyl group of dephosphocoenzyme A to form coenzyme A (CoA). This Methanoregula boonei (strain DSM 21154 / JCM 14090 / 6A8) protein is GTP-dependent dephospho-CoA kinase.